The following is a 411-amino-acid chain: Arginine deiminase (411 aa).

Cysteine 401 (amidino-cysteine intermediate) is an active-site residue.

The protein belongs to the arginine deiminase family.

The protein resides in the cytoplasm. It carries out the reaction L-arginine + H2O = L-citrulline + NH4(+). The protein operates within amino-acid degradation; L-arginine degradation via ADI pathway; carbamoyl phosphate from L-arginine: step 1/2. The sequence is that of Arginine deiminase from Streptococcus equi subsp. zooepidemicus (strain MGCS10565).